The sequence spans 971 residues: Reversion-inducing cysteine-rich protein with Kazal motifs (971 aa).

The signal sequence occupies residues 1-22 (MASVRASPRSALLLLLAAAGVA). The Knot 1 repeat unit spans residues 37–84 (CCNHSKDNQMCRDVCEQIFSSKSESRLKHLLQRAPDYCPETMVEIWSC). Residues 37-338 (CCNHSKDNQM…NPVEVSMLTC (302 aa)) form a 5 X Knot repeats region. N-linked (GlcNAc...) asparagine glycosylation is found at N39 and N86. 2 Knot repeats span residues 104–141 (CCEL…LFSC) and 151–197 (CCSY…LIHC). N-linked (GlcNAc...) asparagine glycosylation is present at N200. Knot repeat units lie at residues 216-263 (CCDR…LWQC) and 292-338 (CCSK…MLTC). N-linked (GlcNAc...) asparagine glycans are attached at residues N297 and N352. Kazal-like domains lie at 627–673 (TFTG…PCIS), 698–752 (TFDK…PCQP), and 753–789 (FCRA…PCQA). Cystine bridges form between C633–C658, C635–C654, C643–C671, C716–C735, C724–C750, and C761–C787. The Kazal-like 2; degenerate domain maps to 704-750 (CSQYECVPRQLTCDQARDPVCDTDHMEHSNLCTLYQRGKSLSYRGPC). S942 carries the GPI-anchor amidated serine lipid modification. A propeptide spans 943–971 (SAVVGRPLFHSLLLLLSLGLTVHLLWTRP) (removed in mature form).

The protein belongs to the RECK family. As to quaternary structure, interacts (via knot repeats) with WNT7A (via disordered linker region); the interaction is direct. Interacts (via knot repeats) with WNT7B (via disordered linker region); the interaction is direct. Interacts with ADGRA2; the interaction is direct. Interacts with MMP9.

It localises to the cell membrane. Functionally, functions together with ADGRA2 to enable brain endothelial cells to selectively respond to Wnt7 signals (WNT7A or WNT7B). Plays a key role in Wnt7-specific responses: required for central nervous system (CNS) angiogenesis and blood-brain barrier regulation. Acts as a Wnt7-specific coactivator of canonical Wnt signaling by decoding Wnt ligands: acts by interacting specifically with the disordered linker region of Wnt7, thereby conferring ligand selectivity for Wnt7. ADGRA2 is then required to deliver RECK-bound Wnt7 to frizzled by assembling a higher-order RECK-ADGRA2-Fzd-LRP5-LRP6 complex. Also acts as a serine protease inhibitor: negatively regulates matrix metalloproteinase-9 (MMP9) by suppressing MMP9 secretion and by direct inhibition of its enzymatic activity. Also inhibits metalloproteinase activity of MMP2 and MMP14 (MT1-MMP). The polypeptide is Reversion-inducing cysteine-rich protein with Kazal motifs (Mus musculus (Mouse)).